A 191-amino-acid chain; its full sequence is Peptidyl-tRNA hydrolase (191 aa).

Tyr-17 serves as a coordination point for tRNA. His-22 acts as the Proton acceptor in catalysis. TRNA contacts are provided by Tyr-68, Asn-70, and Asn-116.

Belongs to the PTH family. As to quaternary structure, monomer.

It is found in the cytoplasm. The enzyme catalyses an N-acyl-L-alpha-aminoacyl-tRNA + H2O = an N-acyl-L-amino acid + a tRNA + H(+). Functionally, hydrolyzes ribosome-free peptidyl-tRNAs (with 1 or more amino acids incorporated), which drop off the ribosome during protein synthesis, or as a result of ribosome stalling. In terms of biological role, catalyzes the release of premature peptidyl moieties from peptidyl-tRNA molecules trapped in stalled 50S ribosomal subunits, and thus maintains levels of free tRNAs and 50S ribosomes. The chain is Peptidyl-tRNA hydrolase from Mycobacterium marinum (strain ATCC BAA-535 / M).